We begin with the raw amino-acid sequence, 159 residues long: Protein Smg homolog (159 aa).

The protein belongs to the Smg family.

The sequence is that of Protein Smg homolog from Vibrio parahaemolyticus serotype O3:K6 (strain RIMD 2210633).